A 251-amino-acid chain; its full sequence is GTP cyclohydrolase 1 type 2 homolog (251 aa).

5 residues coordinate a divalent metal cation: H64, H65, D102, H219, and E223.

The protein belongs to the GTP cyclohydrolase I type 2/NIF3 family. In terms of assembly, homohexamer.

This Chlamydia pneumoniae (Chlamydophila pneumoniae) protein is GTP cyclohydrolase 1 type 2 homolog.